We begin with the raw amino-acid sequence, 231 residues long: 2-hydroxy-3-keto-5-methylthiopentenyl-1-phosphate phosphatase (231 aa).

The protein belongs to the HAD-like hydrolase superfamily. MtnX family.

The enzyme catalyses 2-hydroxy-5-methylsulfanyl-3-oxopent-1-enyl phosphate + H2O = 1,2-dihydroxy-5-(methylsulfanyl)pent-1-en-3-one + phosphate. It functions in the pathway amino-acid biosynthesis; L-methionine biosynthesis via salvage pathway; L-methionine from S-methyl-5-thio-alpha-D-ribose 1-phosphate: step 4/6. Its function is as follows. Dephosphorylates 2-hydroxy-3-keto-5-methylthiopentenyl-1-phosphate (HK-MTPenyl-1-P) yielding 1,2-dihydroxy-3-keto-5-methylthiopentene (DHK-MTPene). This Bacillus pumilus (strain SAFR-032) protein is 2-hydroxy-3-keto-5-methylthiopentenyl-1-phosphate phosphatase.